The chain runs to 569 residues: Proline--tRNA ligase (569 aa).

Belongs to the class-II aminoacyl-tRNA synthetase family. ProS type 1 subfamily. In terms of assembly, homodimer.

The protein localises to the cytoplasm. The enzyme catalyses tRNA(Pro) + L-proline + ATP = L-prolyl-tRNA(Pro) + AMP + diphosphate. Catalyzes the attachment of proline to tRNA(Pro) in a two-step reaction: proline is first activated by ATP to form Pro-AMP and then transferred to the acceptor end of tRNA(Pro). As ProRS can inadvertently accommodate and process non-cognate amino acids such as alanine and cysteine, to avoid such errors it has two additional distinct editing activities against alanine. One activity is designated as 'pretransfer' editing and involves the tRNA(Pro)-independent hydrolysis of activated Ala-AMP. The other activity is designated 'posttransfer' editing and involves deacylation of mischarged Ala-tRNA(Pro). The misacylated Cys-tRNA(Pro) is not edited by ProRS. The chain is Proline--tRNA ligase from Dehalococcoides mccartyi (strain CBDB1).